The sequence spans 156 residues: NAD(P)H-quinone oxidoreductase subunit N (156 aa).

It belongs to the complex I NdhN subunit family. As to quaternary structure, NDH-1 can be composed of about 15 different subunits; different subcomplexes with different compositions have been identified which probably have different functions.

It localises to the cellular thylakoid membrane. It carries out the reaction a plastoquinone + NADH + (n+1) H(+)(in) = a plastoquinol + NAD(+) + n H(+)(out). The enzyme catalyses a plastoquinone + NADPH + (n+1) H(+)(in) = a plastoquinol + NADP(+) + n H(+)(out). Its function is as follows. NDH-1 shuttles electrons from an unknown electron donor, via FMN and iron-sulfur (Fe-S) centers, to quinones in the respiratory and/or the photosynthetic chain. The immediate electron acceptor for the enzyme in this species is believed to be plastoquinone. Couples the redox reaction to proton translocation, and thus conserves the redox energy in a proton gradient. Cyanobacterial NDH-1 also plays a role in inorganic carbon-concentration. The protein is NAD(P)H-quinone oxidoreductase subunit N of Prochlorococcus marinus subsp. pastoris (strain CCMP1986 / NIES-2087 / MED4).